Reading from the N-terminus, the 671-residue chain is UvrABC system protein B (671 aa).

The 158-residue stretch at glutamate 26–arginine 183 folds into the Helicase ATP-binding domain. Position 39–46 (glycine 39–threonine 46) interacts with ATP. Positions tyrosine 92–valine 115 match the Beta-hairpin motif. The Helicase C-terminal domain occupies glutamine 431 to isoleucine 593. In terms of domain architecture, UVR spans aspartate 631–glutamine 666.

This sequence belongs to the UvrB family. Forms a heterotetramer with UvrA during the search for lesions. Interacts with UvrC in an incision complex.

It is found in the cytoplasm. Its function is as follows. The UvrABC repair system catalyzes the recognition and processing of DNA lesions. A damage recognition complex composed of 2 UvrA and 2 UvrB subunits scans DNA for abnormalities. Upon binding of the UvrA(2)B(2) complex to a putative damaged site, the DNA wraps around one UvrB monomer. DNA wrap is dependent on ATP binding by UvrB and probably causes local melting of the DNA helix, facilitating insertion of UvrB beta-hairpin between the DNA strands. Then UvrB probes one DNA strand for the presence of a lesion. If a lesion is found the UvrA subunits dissociate and the UvrB-DNA preincision complex is formed. This complex is subsequently bound by UvrC and the second UvrB is released. If no lesion is found, the DNA wraps around the other UvrB subunit that will check the other stand for damage. The sequence is that of UvrABC system protein B from Yersinia pestis bv. Antiqua (strain Antiqua).